A 139-amino-acid polypeptide reads, in one-letter code: Insulin-like growth factor (139 aa).

The first 38 residues, 1-38, serve as a signal peptide directing secretion; it reads YIRRVRQGSIYSLLVESQQWCKLTLTLLLLLALLTRCT. Residues 39 to 67 are b; that stretch reads LSETLCGSELVDTLQFVCDDRGFFFVPQH. The tract at residues 68–82 is c; sequence VPPRRGAHRRSRARK. Residues 83–103 form an a region; sequence GIVEECCFKGCSLRLLEMYCA. A d region spans residues 104–113; the sequence is RPSKAERDVA. The disordered stretch occupies residues 108–139; sequence AERDVARPRQRPHRASQHSRRGSQSRGRGRSR. Positions 114–139 are e; it reads RPRQRPHRASQHSRRGSQSRGRGRSR. Over residues 115–139 the composition is skewed to basic residues; it reads PRQRPHRASQHSRRGSQSRGRGRSR.

This sequence belongs to the insulin family.

The protein resides in the secreted. Its function is as follows. The insulin-like growth factors, isolated from plasma, are structurally and functionally related to insulin but have a much higher growth-promoting activity. The polypeptide is Insulin-like growth factor (Myxine glutinosa (Atlantic hagfish)).